Reading from the N-terminus, the 706-residue chain is Forkhead box protein P2 (706 aa).

Residues 1-28 (MMQESATETISNSSMNQNGMSTLSSQLD) are compositionally biased toward polar residues. 2 disordered regions span residues 1–45 (MMQE…SEVS) and 275–305 (IKHG…ITHH). Residues 287 to 296 (SSSTTSTTTS) show a composition bias toward low complexity. The C2H2-type zinc-finger motif lies at 337–362 (GVCKWPGCENICEDFGQFLKHLNNEH). A leucine-zipper region spans residues 379-400 (VQQLEIQLSKERERLQAMMTHL). The ctbp1-binding stretch occupies residues 413 to 417 (PLNLV). Positions 495 to 585 (RPPFTYATLI…SQKITASPTL (91 aa)) form a DNA-binding region, fork-head. Residues 672 to 706 (DDEDCPMSLVTTANHSPELEEDRELEEEPLSEDLE) form a disordered region. Over residues 690–706 (LEEDRELEEEPLSEDLE) the composition is skewed to acidic residues.

In terms of assembly, dimerization is required for DNA-binding. As to expression, at stage 15, expressed in the anterior/superior eye field and the caudal branchial arch. At later stages, expression persists in the retina and in the caudal branchial arch. Expressed in the pronephros and the tip of the tail. Beginning with stage 35, expression in the brain is localized to distinct subdomains of the anterior prosencephalon, the medial mesencephalon and to lateral domains of the hindbrain.

It localises to the nucleus. Functionally, transcriptional repressor. The polypeptide is Forkhead box protein P2 (Xenopus laevis (African clawed frog)).